The sequence spans 236 residues: Phosphoglycolate phosphatase (236 aa).

D14 functions as the Nucleophile in the catalytic mechanism. D14, D16, and D177 together coordinate Mg(2+).

It belongs to the HAD-like hydrolase superfamily. CbbY/CbbZ/Gph/YieH family. It depends on Mg(2+) as a cofactor.

The catalysed reaction is 2-phosphoglycolate + H2O = glycolate + phosphate. Its pathway is organic acid metabolism; glycolate biosynthesis; glycolate from 2-phosphoglycolate: step 1/1. Specifically catalyzes the dephosphorylation of 2-phosphoglycolate. Is involved in the dissimilation of the intracellular 2-phosphoglycolate formed during the DNA repair of 3'-phosphoglycolate ends, a major class of DNA lesions induced by oxidative stress. The sequence is that of Phosphoglycolate phosphatase from Neisseria gonorrhoeae (strain ATCC 700825 / FA 1090).